Consider the following 379-residue polypeptide: Protein PatA (379 aa).

Positions 181–226 are disordered; the sequence is RREASSQEISSSTEHNQIPVNNRRSTKFTSPPHTQPKPEPRLPQIN. A compositionally biased stretch (polar residues) spans 186-212; sequence SQEISSSTEHNQIPVNNRRSTKFTSPP. Residues 262–378 form the Response regulatory domain; the sequence is TIFCIDENPI…DLLKVIFKHI (117 aa). Asp-313 bears the 4-aspartylphosphate mark.

The protein resides in the cell septum. In terms of biological role, controls heterocyst pattern formation. Required for the differentiation of intercalary heterocysts but not for terminal heterocysts. The chain is Protein PatA (patA) from Nostoc sp. (strain PCC 7120 / SAG 25.82 / UTEX 2576).